The following is a 994-amino-acid chain: MLRQNLLDQLKHFIETVSNGHSCPQLLTSPNLIKLALGFLEELPATRDIVFEYFALLAEISVQLYVSPEMADPKTGMPVSQVKLAGNRQQQQRAPEYEAFNLVKTALQSLVWKGPPAWSPLIANWSLELVAKLSDKYTQRRMTITASCNYWLECSAMHGLMTLINSCFRKLTQPEEEACVEIMLNAFHRFPMTFDWIVARLGGCFPYKIIMQILQCGIKRFVDDYRCHLDSEAGILDYMTSCHEQHLRAAFREMLREGFAPKKPLDVAVVPFLLITTNYSDTILQSLVNVLVEIYTEDMCEVIVQKAPLWLSNKMFAGMQPTLNNAVLRLNERGATLLLTAAKMAEKYVWCQDFLDNSMQELEQWVLNQRNFPLLADLAYEETKYMLWKSCLSTNLFEQQTAVRLLLVVSSQHPNIYYQTISQLLKKSYAQNPNGIGALIRLLGGQSGMVNFPGFTPGFKMVLEDITLDVQVNNRLPVPPGTPTEAFNTFSNLNILARMHKSKNVAPYIKAQHLNQALNECLPKILQIFDCTVNKLVLRIDRDAAERIADKFRAQQSKNSNNNNELCNGKDYGKRTKLEPGEDKVDDEDATRMRLAHLIVDLLNNIEAGSRTTVLRTPLVLKLATLSVKYFFVGLTEKTVIRRAAASHRSYTLLQRQCSARKIARTVCLRELVERALFYHGHLLGQLEVYQLDELEIPEHEHLILQNLHTSSGANSNRSVLHSGIIGRGLRPVLPPSERNCDAEKQALYLKALNACCADLEKPNNVEGYSLVSLLLVELVSTDVMYNGLPFPDEEFTRVTMERDMLIRRAFINSPVLWAVLGLIAGHRPALCYSSVLLRALCATCLHHWRGKNVNRFQPTAANDELMLCTKKMLQLLAMSQLIPPPLTNLHLIIEHFESAEIALLLRECIWNYLKDHVPSPALFHVDNNGLHWRNTNTQLAKVPPQYVDPLRHLMQRKLSTLGPHYHQMFIMGELMEGDSEPDPTARLQIVEID.

Residues 559–586 (NSNNNNELCNGKDYGKRTKLEPGEDKVD) form a disordered region. Over residues 571–583 (DYGKRTKLEPGED) the composition is skewed to basic and acidic residues. 2 helical membrane-spanning segments follow: residues 769-786 (YSLV…DVMY) and 810-826 (AFIN…LIAG).

Belongs to the Integrator subunit 5 family. Belongs to the multiprotein complex Integrator, at least composed of IntS1, IntS2, IntS3, IntS4, omd/IntS5, IntS6, defl/IntS7, IntS8, IntS9, IntS10, IntS11, IntS12, asun/IntS13, IntS14 and IntS15. The core complex associates with protein phosphatase 2A subunits mts/PP2A and Pp2A-29B, to form the Integrator-PP2A (INTAC) complex.

The protein resides in the nucleus membrane. It localises to the nucleus. Its subcellular location is the cytoplasm. Component of the integrator complex, a multiprotein complex that terminates RNA polymerase II (Pol II) transcription in the promoter-proximal region of genes. The integrator complex provides a quality checkpoint during transcription elongation by driving premature transcription termination of transcripts that are unfavorably configured for transcriptional elongation: the complex terminates transcription by (1) catalyzing dephosphorylation of the C-terminal domain (CTD) of Pol II subunit Polr2A/Rbp1 and Spt5, and (2) degrading the exiting nascent RNA transcript via endonuclease activity. The integrator complex is also involved in the 3'-end processing of the U7 snRNA, and also the spliceosomal snRNAs U1, U2, U4 and U5. This Drosophila melanogaster (Fruit fly) protein is Integrator complex subunit 5.